Reading from the N-terminus, the 117-residue chain is Appetite-regulating hormone (117 aa).

A signal peptide spans 1–23 (MPSPGTVCSLLLFSMLWADLAMA). A lipid anchor (O-decanoyl serine; alternate) is attached at serine 26. Residue serine 26 is the site of O-hexanoyl serine; alternate attachment. Serine 26 carries the O-octanoyl serine; alternate lipid modification. Positions 29–52 (SPEHQKVQQRKESKKPPAKLQPRA) are disordered. Residues 31-43 (EHQKVQQRKESKK) show a composition bias toward basic and acidic residues. The propeptide at 52–75 (ALEGLIHPEDTSQVEGAEDELEIR) is removed in mature form. Position 98 is a leucine amide (leucine 98). The propeptide at 99 to 117 (GKFLQDVLWEEADEVLADE) is removed in mature form.

The protein belongs to the motilin family. Post-translationally, O-octanoylated by GOAT/MBOAT4. O-octanoylation or O-decanoylation is essential for ghrelin activity. The O-decanoylated forms Ghrelin-27-C10 and Ghrelin-28-C10 differ in the length of the carbon backbone of the carboxylic acid bound to Ser-26. A small fraction of ghrelin, ghrelin-27-C10:1, ghrelin-27-C10:2, ghrelin-28-C8:1, ghrelin-28-C10:1, and ghrelin-28-C10:2, may be modified with singly or doubly unsaturated carboxylic acids. In terms of processing, amidation of Leu-98 is essential for obestatin activity.

The protein resides in the secreted. Its function is as follows. Ghrelin is the ligand for growth hormone secretagogue receptor type 1 (GHSR). Induces the release of growth hormone from the pituitary. Has an appetite-stimulating effect, induces adiposity and stimulates gastric acid secretion. Involved in growth regulation. In terms of biological role, obestatin may be the ligand for GPR39. May have an appetite-reducing effect resulting in decreased food intake. May reduce gastric emptying activity and jejunal motility. This Felis catus (Cat) protein is Appetite-regulating hormone (GHRL).